The following is an 851-amino-acid chain: Glycogen phosphorylase, liver form (851 aa).

N-acetylalanine is present on Ala2. A Phosphoserine; by PHK; in form phosphorylase a modification is found at Ser15. AMP is bound by residues 43 to 45 (DRN), Tyr76, and Arg310. Position 364 is an N6-succinyllysine (Lys364). An N6-acetyllysine modification is found at Lys470. A phosphoserine mark is found at Ser524, Ser561, and Ser639. Lys681 bears the N6-(pyridoxal phosphate)lysine mark. Lys796 carries the N6-acetyllysine modification.

The protein belongs to the glycogen phosphorylase family. As to quaternary structure, homodimer; enzymatically active. Interacts with PPP1R3B; recruits the phosphatase PP1 which dephosphorylates and inactivates PYGL/glycogen phosphorylase. Pyridoxal 5'-phosphate serves as cofactor. Acetylation, which is up-regulated by glucose and insulin and down-regulated by glucagon, inhibits the glycogen phosphorylase activity by promoting PPP1R3B-mediated recruitment of phosphatase PP1 and Ser-15 dephosphorylation. In terms of processing, phosphorylation at Ser-15 converts inactive phosphorylase b into active phosphorylase a. Dephosphorylation of Ser-15 by phosphatase PP1 inactivates the enzyme.

The protein localises to the cytoplasm. It is found in the cytosol. The enzyme catalyses [(1-&gt;4)-alpha-D-glucosyl](n) + phosphate = [(1-&gt;4)-alpha-D-glucosyl](n-1) + alpha-D-glucose 1-phosphate. With respect to regulation, allosterically regulated through the non-covalent binding of metabolites, being activated by AMP and inhibited by ATP, ADP, and glucose-6-phosphate. The activity is also controlled by post-translational modifications including phosphorylation and acetylation. Functionally, allosteric enzyme that catalyzes the rate-limiting step in glycogen catabolism, the phosphorolytic cleavage of glycogen to produce glucose-1-phosphate, and plays a central role in maintaining cellular and organismal glucose homeostasis. This chain is Glycogen phosphorylase, liver form, found in Bos taurus (Bovine).